The sequence spans 116 residues: Ferredoxin (116 aa).

4Fe-4S ferredoxin-type domains lie at 2-31 (TYVV…EGER) and 35-64 (FMLV…PESP). [3Fe-4S] cluster-binding residues include C9 and C17. Residues C21, C44, C47, and C50 each coordinate [4Fe-4S] cluster. A [3Fe-4S] cluster-binding site is contributed by C54.

Requires [4Fe-4S] cluster as cofactor. The cofactor is [3Fe-4S] cluster.

Ferredoxins are iron-sulfur proteins that transfer electrons in a wide variety of metabolic reactions. This chain is Ferredoxin (fdxA), found in Rickettsia conorii (strain ATCC VR-613 / Malish 7).